The chain runs to 878 residues: Pyruvate, phosphate dikinase (878 aa).

Positions 1-347 (MKKLIYYFGS…LYILQTRTAK (347 aa)) are N-terminal. Arginine 96 is an ATP binding site. The linker 1 stretch occupies residues 348–404 (RTAIAAINIAVQMVEEKLISKEQALMRIDPESLNQLLHTRIDYSKGLTSIAEGLPAS). Positions 405–502 (PGAATGIAVF…VIKQGDIITI (98 aa)) are central. Phosphothreonine; by PDRP1 is present on threonine 457. The active-site Tele-phosphohistidine intermediate is the histidine 459. A linker 2 region spans residues 503 to 537 (DGGSGKIFLGEMPLIQPTFSEESKLILDWADEISS). The C-terminal stretch occupies residues 538-878 (LKVRANAETV…AAAQAKIKHG (341 aa)). Arginine 565, arginine 621, glutamate 749, glycine 770, threonine 771, asparagine 772, and aspartate 773 together coordinate substrate. Residue glutamate 749 coordinates Mg(2+). Residue aspartate 773 coordinates Mg(2+). Cysteine 835 serves as the catalytic Proton donor.

This sequence belongs to the PEP-utilizing enzyme family. As to quaternary structure, homodimer. The cofactor is Mg(2+). Phosphorylation of Thr-457 in the dark inactivates the enzyme. Dephosphorylation upon light stimulation reactivates the enzyme.

It catalyses the reaction pyruvate + phosphate + ATP = phosphoenolpyruvate + AMP + diphosphate + H(+). Activated by light-induced dephosphorylation. Inhibited by dark-induced phosphorylation. Both reactions are catalyzed by PDRP1. Its function is as follows. Catalyzes the reversible phosphorylation of pyruvate and phosphate. The polypeptide is Pyruvate, phosphate dikinase (ppdK) (Rickettsia conorii (strain ATCC VR-613 / Malish 7)).